The sequence spans 239 residues: Orotidine 5'-phosphate decarboxylase (239 aa).

Residues D10, K32, 59-68, T122, R184, Q193, G213, and R214 contribute to the substrate site; that span reads DLKLHDIPNT. K61 serves as the catalytic Proton donor.

This sequence belongs to the OMP decarboxylase family. Type 1 subfamily. In terms of assembly, homodimer.

It catalyses the reaction orotidine 5'-phosphate + H(+) = UMP + CO2. Its pathway is pyrimidine metabolism; UMP biosynthesis via de novo pathway; UMP from orotate: step 2/2. In terms of biological role, catalyzes the decarboxylation of orotidine 5'-monophosphate (OMP) to uridine 5'-monophosphate (UMP). The sequence is that of Orotidine 5'-phosphate decarboxylase from Geobacillus thermodenitrificans (strain NG80-2).